A 248-amino-acid chain; its full sequence is MKYLKRILLMVGFLTRIPVPFKIDGTEEDYGKGLVFAPVVGLLIGGILTILFYILKRFFPPGVTGILLIAAYIMLTGGLHLDGLGDTFDGIFSNRSREKMLEIMRDSRIGTNAVLAVICVVILNYALLSSIPLSGLPKALLLFPVAGRIGSLVGAGSTVYAREGEGLGKSFINCCGIKEILQGGIIYFIVSLLVLNIKGLLLAAATMITSFATVKFFAGKVGGATGDILGAVCELNQTFFLILFYLFK.

The next 6 helical transmembrane spans lie at 34 to 54 (LVFA…LFYI), 58 to 78 (FFPP…LTGG), 113 to 133 (AVLA…SIPL), 139 to 159 (ALLL…GSTV), 185 to 205 (IIYF…LAAA), and 227 to 247 (DILG…FYLF).

It belongs to the CobS family. Mg(2+) serves as cofactor.

The protein resides in the cell membrane. It carries out the reaction alpha-ribazole + adenosylcob(III)inamide-GDP = adenosylcob(III)alamin + GMP + H(+). The catalysed reaction is alpha-ribazole 5'-phosphate + adenosylcob(III)inamide-GDP = adenosylcob(III)alamin 5'-phosphate + GMP + H(+). The protein operates within cofactor biosynthesis; adenosylcobalamin biosynthesis; adenosylcobalamin from cob(II)yrinate a,c-diamide: step 7/7. In terms of biological role, joins adenosylcobinamide-GDP and alpha-ribazole to generate adenosylcobalamin (Ado-cobalamin). Also synthesizes adenosylcobalamin 5'-phosphate from adenosylcobinamide-GDP and alpha-ribazole 5'-phosphate. The polypeptide is Adenosylcobinamide-GDP ribazoletransferase (Acetivibrio thermocellus (strain ATCC 27405 / DSM 1237 / JCM 9322 / NBRC 103400 / NCIMB 10682 / NRRL B-4536 / VPI 7372) (Clostridium thermocellum)).